Here is a 172-residue protein sequence, read N- to C-terminus: MPLRASEHAYRPLGPGTPPVRARLPAAAWVGVGTIIGGVVIIAALVLVPSRASWALSPCDSGWHEFNLGCISWDPTPMEHEQAVGGCSAPATLIPRAAAKQLAAVARVQSARSSGYWWVSGDGIRARLRLVDGVGGIDQFCEEPALRICYYPRSPGGFVQFVTSTRNALGLP.

Residues 1–27 (MPLRASEHAYRPLGPGTPPVRARLPAA) lie on the Intravirion side of the membrane. Residues 28 to 48 (AWVGVGTIIGGVVIIAALVLV) form a helical; Signal-anchor for type II membrane protein membrane-spanning segment. Topologically, residues 49–172 (PSRASWALSP…TSTRNALGLP (124 aa)) are virion surface.

It belongs to the herpesviridae HHV-1 UL45 family.

It is found in the virion membrane. Functionally, important virulence factor of HSV neurotropism. Seems to be required for glycoprotein B-induced fusion. Dispensable for growth in vitro. This is Envelope protein UL45 from Homo sapiens (Human).